The following is a 152-amino-acid chain: Superoxide dismutase [Cu-Zn] 1 (152 aa).

Cu cation is bound by residues histidine 45, histidine 47, and histidine 62. A disulfide bridge links cysteine 56 with cysteine 145. Residues histidine 62, histidine 70, histidine 79, and aspartate 82 each contribute to the Zn(2+) site. Histidine 119 is a binding site for Cu cation.

This sequence belongs to the Cu-Zn superoxide dismutase family. Homodimer. Cu cation serves as cofactor. Zn(2+) is required as a cofactor.

Its subcellular location is the cytoplasm. It carries out the reaction 2 superoxide + 2 H(+) = H2O2 + O2. Destroys radicals which are normally produced within the cells and which are toxic to biological systems. This Solanum lycopersicum (Tomato) protein is Superoxide dismutase [Cu-Zn] 1 (SODCC.1).